Consider the following 322-residue polypeptide: 2-methylene-furan-3-one reductase (322 aa).

NADP(+)-binding positions include lysine 59, 174 to 175 (GV), 197 to 200 (STKK), tyrosine 215, isoleucine 253, 264 to 266 (FVL), 311 to 312 (RA), and 311 to 322 (RATGKVVVYPIP). Lysine 59 provides a ligand contact to substrate.

It belongs to the zinc-containing alcohol dehydrogenase family. Quinone oxidoreductase subfamily. In terms of assembly, monomer. The N-terminus is blocked.

The catalysed reaction is 4-hydroxy-2,5-dimethyl-furan-3(2H)-one + NADP(+) = 4-hydroxy-5-methyl-2-methylenefuran-3(2H)-one + NADPH + H(+). Enone oxidoreductase involved in the biosynthesis of 4-hydroxy-2,5-dimethyl-3(2H)-furanone (HDMF or furaneol), the key flavor compound in strawberries. Can use both NADH and NADPH as the electron donor. This Fragaria ananassa (Strawberry) protein is 2-methylene-furan-3-one reductase (EO).